Reading from the N-terminus, the 185-residue chain is Putative lipoprotein LprB (185 aa).

A signal peptide spans 1-24 (MRRKVRRLTLAVSALVALFPAVAG). A lipid anchor (N-palmitoyl cysteine) is attached at Cys25. The S-diacylglycerol cysteine moiety is linked to residue Cys25. The tract at residues 26–50 (SDSGDNKPGATIPSTPANAEGRHGP) is disordered.

It localises to the cell membrane. The protein is Putative lipoprotein LprB (lprB) of Mycobacterium bovis (strain ATCC BAA-935 / AF2122/97).